A 354-amino-acid chain; its full sequence is MERNTRVVKVANLKIGGNNPIIIQSMTNTNSADVEATVKQINNLEKVGCQLVRMTINNIKAAEAIKEIKKKVSLPLVADIHFDYRLALLAIKNGIDKLRINPGNIGSDENVKKVVEAAKEKNIPIRIGVNSGSIEKEILEKYGKPCVDALVESAMYHIRLLEKFDFFDIIVSLKSSNVKMMVEAYRKISSLVDYPLHLGVTEAGTKFQGTVKSAIGIGALLVDGIGDTLRVSLTENPVEEIKVAKEILKVLDLSDEGVEIISCPTCGRTEIDLIGLAKQVEEEFRTKKNKFKIAVMGCVVNGPGEAREADYGIAAGRGIGILFKKGEIIKKVSESNLLEELKKMISEDLENKKD.

Positions 263, 266, 298, and 305 each coordinate [4Fe-4S] cluster.

The protein belongs to the IspG family. Requires [4Fe-4S] cluster as cofactor.

The catalysed reaction is (2E)-4-hydroxy-3-methylbut-2-enyl diphosphate + oxidized [flavodoxin] + H2O + 2 H(+) = 2-C-methyl-D-erythritol 2,4-cyclic diphosphate + reduced [flavodoxin]. The protein operates within isoprenoid biosynthesis; isopentenyl diphosphate biosynthesis via DXP pathway; isopentenyl diphosphate from 1-deoxy-D-xylulose 5-phosphate: step 5/6. Converts 2C-methyl-D-erythritol 2,4-cyclodiphosphate (ME-2,4cPP) into 1-hydroxy-2-methyl-2-(E)-butenyl 4-diphosphate. In Fusobacterium nucleatum subsp. nucleatum (strain ATCC 25586 / DSM 15643 / BCRC 10681 / CIP 101130 / JCM 8532 / KCTC 2640 / LMG 13131 / VPI 4355), this protein is 4-hydroxy-3-methylbut-2-en-1-yl diphosphate synthase (flavodoxin).